The primary structure comprises 316 residues: Vacuolar membrane protein YNL058C (316 aa).

Residues lysine 32–alanine 60 are disordered. Residues valine 93–leucine 113 traverse the membrane as a helical segment. Phosphoserine occurs at positions 148, 256, and 276. The tract at residues glutamate 240–methionine 304 is disordered. Residues serine 256–histidine 271 show a composition bias toward basic and acidic residues.

Belongs to the PRM5 family.

It is found in the vacuole membrane. This Saccharomyces cerevisiae (strain ATCC 204508 / S288c) (Baker's yeast) protein is Vacuolar membrane protein YNL058C.